Reading from the N-terminus, the 670-residue chain is Probable beta-glucosidase N (670 aa).

Residues 1–21 (MHSNILPVLTSVATLLGLVQG) form the signal peptide. Residue asparagine 51 is glycosylated (N-linked (GlcNAc...) asparagine). Residues 65-87 (FEPSDGVRSVQGSGKDYDNPAMR) form a disordered region. Asparagine 141 carries N-linked (GlcNAc...) asparagine glycosylation. The active site involves aspartate 152. N-linked (GlcNAc...) asparagine glycosylation is found at asparagine 184, asparagine 248, asparagine 330, and asparagine 417.

It belongs to the glycosyl hydrolase 3 family.

It localises to the secreted. It carries out the reaction Hydrolysis of terminal, non-reducing beta-D-glucosyl residues with release of beta-D-glucose.. It participates in glycan metabolism; cellulose degradation. Functionally, beta-glucosidases are one of a number of cellulolytic enzymes involved in the degradation of cellulosic biomass. Catalyzes the last step releasing glucose from the inhibitory cellobiose. This is Probable beta-glucosidase N (bglN) from Emericella nidulans (strain FGSC A4 / ATCC 38163 / CBS 112.46 / NRRL 194 / M139) (Aspergillus nidulans).